We begin with the raw amino-acid sequence, 274 residues long: Penicillin-insensitive murein endopeptidase (274 aa).

An N-terminal signal peptide occupies residues 1 to 19; the sequence is MNKTAIALLALLASSASLA. 3 disulfide bridges follow: Cys44–Cys265, Cys187–Cys235, and Cys216–Cys223. Zn(2+) contacts are provided by His110, His113, Asp120, Asp147, His150, and His211. The disordered stretch occupies residues 227–274; that stretch reads PLPPPGDGCGAELQSWFEPPKPGTTKPEKKTPPPLPPSCQALLDEHVI.

It belongs to the peptidase M74 family. As to quaternary structure, dimer. The cofactor is Zn(2+).

The protein resides in the periplasm. Functionally, murein endopeptidase that cleaves the D-alanyl-meso-2,6-diamino-pimelyl amide bond that connects peptidoglycan strands. Likely plays a role in the removal of murein from the sacculus. In Escherichia coli O17:K52:H18 (strain UMN026 / ExPEC), this protein is Penicillin-insensitive murein endopeptidase.